The chain runs to 113 residues: Retrotransposon Gag-like protein 8A (113 aa).

The protein belongs to the FAM127 family.

The sequence is that of Retrotransposon Gag-like protein 8A from Homo sapiens (Human).